A 600-amino-acid polypeptide reads, in one-letter code: UvrABC system protein C (600 aa).

The 86-residue stretch at 15–100 (NSAGVYQYFN…IKQLHPKYNI (86 aa)) folds into the GIY-YIG domain. Residues 203-238 (SVLLKNLEKQMLVLAQNENYEEAAKVRDQIAMIKDL) enclose the UVR domain.

Belongs to the UvrC family. In terms of assembly, interacts with UvrB in an incision complex.

The protein localises to the cytoplasm. Its function is as follows. The UvrABC repair system catalyzes the recognition and processing of DNA lesions. UvrC both incises the 5' and 3' sides of the lesion. The N-terminal half is responsible for the 3' incision and the C-terminal half is responsible for the 5' incision. This Campylobacter jejuni (strain RM1221) protein is UvrABC system protein C.